Here is a 202-residue protein sequence, read N- to C-terminus: Translation initiation factor IF-3 (202 aa).

It belongs to the IF-3 family. Monomer.

It is found in the cytoplasm. IF-3 binds to the 30S ribosomal subunit and shifts the equilibrium between 70S ribosomes and their 50S and 30S subunits in favor of the free subunits, thus enhancing the availability of 30S subunits on which protein synthesis initiation begins. The polypeptide is Translation initiation factor IF-3 (Prochlorococcus marinus (strain MIT 9211)).